A 314-amino-acid chain; its full sequence is MRIIVMGTPDFAVPSLQAIAAMGNGFDIVLVVTGQDKPRKSKHAAAEASPIKQAALALNLPVHEVDDVNDPHFAEIVAAYKPDVIVVAAFRILPPAVYSQARLGAFNLHASLLPAYRGAAPVNWAIMNGEEETGVTTFFLQQRVDTGTIIMQQKTAIAPEENATELIVRLANIGADVVVETLRRIAAKNAATAPQDDSLASRAPKLTRINTRINWEQPVATLHNFIRGLALKPSAWTTFNDKTLKIFRTTLSTPEHDHPSAPAGSLLVSHGKLYVHGSDGWLELLALQLEGRKPMEAADFARGLHVEGEALRLV.

111 to 114 (SLLP) is a (6S)-5,6,7,8-tetrahydrofolate binding site.

Belongs to the Fmt family.

The catalysed reaction is L-methionyl-tRNA(fMet) + (6R)-10-formyltetrahydrofolate = N-formyl-L-methionyl-tRNA(fMet) + (6S)-5,6,7,8-tetrahydrofolate + H(+). Its function is as follows. Attaches a formyl group to the free amino group of methionyl-tRNA(fMet). The formyl group appears to play a dual role in the initiator identity of N-formylmethionyl-tRNA by promoting its recognition by IF2 and preventing the misappropriation of this tRNA by the elongation apparatus. This is Methionyl-tRNA formyltransferase from Chlorobium chlorochromatii (strain CaD3).